We begin with the raw amino-acid sequence, 424 residues long: Histidine--tRNA ligase (424 aa).

Belongs to the class-II aminoacyl-tRNA synthetase family. As to quaternary structure, homodimer.

The protein resides in the cytoplasm. It catalyses the reaction tRNA(His) + L-histidine + ATP = L-histidyl-tRNA(His) + AMP + diphosphate + H(+). This is Histidine--tRNA ligase from Salmonella gallinarum (strain 287/91 / NCTC 13346).